Here is a 167-residue protein sequence, read N- to C-terminus: Putative peroxiredoxin-B (167 aa).

The region spanning Ile-4 to Leu-167 is the Thioredoxin domain. Catalysis depends on Cys-53, which acts as the Cysteine sulfenic acid (-SOH) intermediate. The Microbody targeting signal motif lies at Ala-165–Leu-167.

It belongs to the peroxiredoxin family. Prx5 subfamily.

Its subcellular location is the peroxisome membrane. The enzyme catalyses a hydroperoxide + [thioredoxin]-dithiol = an alcohol + [thioredoxin]-disulfide + H2O. Its function is as follows. Thiol-specific peroxidase that catalyzes the reduction of hydrogen peroxide and organic hydroperoxides to water and alcohols, respectively. Plays a role in cell protection against oxidative stress by detoxifying peroxides and as sensor of hydrogen peroxide-mediated signaling events. The polypeptide is Putative peroxiredoxin-B (PMPB) (Candida boidinii (Yeast)).